The chain runs to 490 residues: Cis-aconitate decarboxylase (490 aa).

It belongs to the PrpD family. In terms of assembly, homodimer.

The protein localises to the mitochondrion. The catalysed reaction is cis-aconitate + H(+) = itaconate + CO2. Its function is as follows. Involved in the production of itaconic acid, a soluble unsaturated dicarboxylic acid mainly produced from sugars. The chain is Cis-aconitate decarboxylase (cad1) from Aspergillus terreus (strain NIH 2624 / FGSC A1156).